Reading from the N-terminus, the 905-residue chain is Protein translocase subunit SecA (905 aa).

ATP-binding positions include Gln89, 107 to 111 (GEGKT), and Asp502. The interval 837-885 (EQTDVGDPILNDQNKKNSSTLWTPSQENKFVNPKDRNPSDSTTWGKVGR) is disordered. A compositionally biased stretch (polar residues) spans 852-865 (KNSSTLWTPSQENK). Cys889, Cys891, Cys900, and His901 together coordinate Zn(2+).

This sequence belongs to the SecA family. As to quaternary structure, monomer and homodimer. Part of the essential Sec protein translocation apparatus which comprises SecA, SecYEG and auxiliary proteins SecDF-YajC and YidC. Zn(2+) is required as a cofactor.

The protein resides in the cell inner membrane. Its subcellular location is the cytoplasm. It catalyses the reaction ATP + H2O + cellular proteinSide 1 = ADP + phosphate + cellular proteinSide 2.. Functionally, part of the Sec protein translocase complex. Interacts with the SecYEG preprotein conducting channel. Has a central role in coupling the hydrolysis of ATP to the transfer of proteins into and across the cell membrane, serving both as a receptor for the preprotein-SecB complex and as an ATP-driven molecular motor driving the stepwise translocation of polypeptide chains across the membrane. In Bartonella henselae (strain ATCC 49882 / DSM 28221 / CCUG 30454 / Houston 1) (Rochalimaea henselae), this protein is Protein translocase subunit SecA.